We begin with the raw amino-acid sequence, 361 residues long: Phosphoserine aminotransferase (361 aa).

Arginine 42 contributes to the L-glutamate binding site. Residues 76–77, tryptophan 102, threonine 152, aspartate 172, and glutamine 195 each bind pyridoxal 5'-phosphate; that span reads AS. Position 196 is an N6-(pyridoxal phosphate)lysine (lysine 196). Residue 237 to 238 participates in pyridoxal 5'-phosphate binding; the sequence is NT.

Belongs to the class-V pyridoxal-phosphate-dependent aminotransferase family. SerC subfamily. Homodimer. The cofactor is pyridoxal 5'-phosphate.

It localises to the cytoplasm. It carries out the reaction O-phospho-L-serine + 2-oxoglutarate = 3-phosphooxypyruvate + L-glutamate. The catalysed reaction is 4-(phosphooxy)-L-threonine + 2-oxoglutarate = (R)-3-hydroxy-2-oxo-4-phosphooxybutanoate + L-glutamate. It participates in amino-acid biosynthesis; L-serine biosynthesis; L-serine from 3-phospho-D-glycerate: step 2/3. Its function is as follows. Catalyzes the reversible conversion of 3-phosphohydroxypyruvate to phosphoserine and of 3-hydroxy-2-oxo-4-phosphonooxybutanoate to phosphohydroxythreonine. The polypeptide is Phosphoserine aminotransferase (Halalkalibacterium halodurans (strain ATCC BAA-125 / DSM 18197 / FERM 7344 / JCM 9153 / C-125) (Bacillus halodurans)).